A 156-amino-acid chain; its full sequence is uncharacterized protein (156 aa).

The N-acetyltransferase domain occupies 11–156; that stretch reads EEFRSYLTYT…ETDVVMSKKL (146 aa).

This sequence belongs to the acetyltransferase family. As to quaternary structure, homodimer.

This is an uncharacterized protein from Bacillus subtilis (strain 168).